Here is a 640-residue protein sequence, read N- to C-terminus: Threonine--tRNA ligase (640 aa).

The region spanning 1–59 (MKIKVVLPDGSEREYEKGTKPMEIAREVGIKKVIGAVVDEELWDLKRPLERDCRIRFVT) is the TGS domain. The segment at 240 to 531 (DHRKLGPQLE…LIEHFAGAFP (292 aa)) is catalytic. 3 residues coordinate Zn(2+): Cys332, His383, and His508.

Belongs to the class-II aminoacyl-tRNA synthetase family. Homodimer. Zn(2+) serves as cofactor.

Its subcellular location is the cytoplasm. The enzyme catalyses tRNA(Thr) + L-threonine + ATP = L-threonyl-tRNA(Thr) + AMP + diphosphate + H(+). In terms of biological role, catalyzes the attachment of threonine to tRNA(Thr) in a two-step reaction: L-threonine is first activated by ATP to form Thr-AMP and then transferred to the acceptor end of tRNA(Thr). Also edits incorrectly charged L-seryl-tRNA(Thr). The sequence is that of Threonine--tRNA ligase from Thermotoga neapolitana (strain ATCC 49049 / DSM 4359 / NBRC 107923 / NS-E).